The primary structure comprises 476 residues: Zinc finger protein 563 (476 aa).

The 93-residue stretch at 4-96 folds into the KRAB domain; that stretch reads VAFEDVAVNF…IRDSIVNNSI (93 aa). Residues 101–125 form a C2H2-type 1; degenerate zinc finger; that stretch reads DPCQSAECEEVIMGHLSLNSHIRVD. The C2H2-type 2; degenerate zinc finger occupies 169–191; the sequence is YECKECGKTFSSRRNLRRHMVVQ. 10 consecutive C2H2-type zinc fingers follow at residues 197-219, 225-247, 253-275, 281-303, 309-331, 337-359, 365-387, 393-415, 421-443, and 449-471; these read YKCKLCGKAFFWPSLLRMHERTH, YECKQCSKAFPFYSSYRRHERMH, YECKQCSKALPDSSSYIRHERTH, YTCKQCGKAFSVSSSLRRHETTH, YECKQCGKTFHHLGSFQIHMKRH, HKCKICGKGFDRPSLVRYHERIH, YECKQCGKTLSHSSSFRRHMIMH, HKCKICGKAFVYPSVCQRHEKSH, YECKQCGKALSHSSSFRRHMVMH, and NKCKVCGKAFVYPSVCQRHEKTH.

Belongs to the krueppel C2H2-type zinc-finger protein family.

It is found in the nucleus. Its function is as follows. May be involved in transcriptional regulation. The protein is Zinc finger protein 563 (ZNF563) of Homo sapiens (Human).